The sequence spans 152 residues: Superoxide dismutase [Cu-Zn] (152 aa).

Residues H45, H47, and H62 each coordinate Cu cation. C56 and C145 are disulfide-bonded. Residues H62, H70, H79, and D82 each coordinate Zn(2+). H119 is a binding site for Cu cation.

The protein belongs to the Cu-Zn superoxide dismutase family. As to quaternary structure, homodimer. Cu cation is required as a cofactor. It depends on Zn(2+) as a cofactor.

Its subcellular location is the cytoplasm. It catalyses the reaction 2 superoxide + 2 H(+) = H2O2 + O2. Destroys radicals which are normally produced within the cells and which are toxic to biological systems. The polypeptide is Superoxide dismutase [Cu-Zn] (SODCC) (Pisum sativum (Garden pea)).